A 331-amino-acid polypeptide reads, in one-letter code: RNA 3'-terminal phosphate cyclase (331 aa).

ATP is bound by residues Gln-100 and 276–280 (HLADQ). The Tele-AMP-histidine intermediate role is filled by His-301.

Belongs to the RNA 3'-terminal cyclase family. Type 1 subfamily.

It is found in the cytoplasm. It catalyses the reaction a 3'-end 3'-phospho-ribonucleotide-RNA + ATP = a 3'-end 2',3'-cyclophospho-ribonucleotide-RNA + AMP + diphosphate. Its function is as follows. Catalyzes the conversion of 3'-phosphate to a 2',3'-cyclic phosphodiester at the end of RNA. The mechanism of action of the enzyme occurs in 3 steps: (A) adenylation of the enzyme by ATP; (B) transfer of adenylate to an RNA-N3'P to produce RNA-N3'PP5'A; (C) and attack of the adjacent 2'-hydroxyl on the 3'-phosphorus in the diester linkage to produce the cyclic end product. The biological role of this enzyme is unknown but it is likely to function in some aspects of cellular RNA processing. In Methanococcoides burtonii (strain DSM 6242 / NBRC 107633 / OCM 468 / ACE-M), this protein is RNA 3'-terminal phosphate cyclase.